The sequence spans 185 residues: Male-enhanced antigen 1 (185 aa).

2 disordered regions span residues 1–90 (MGPE…VGDG) and 104–134 (GLHLPDPPLESEDEDEEGATALNNHSSIPMD). 2 stretches are compositionally biased toward acidic residues: residues 50–60 (SSEEPEEEQEE) and 112–121 (LESEDEDEEG). A Phosphoserine modification is found at serine 114.

In terms of tissue distribution, highly expressed in testis.

May play an important role in spermatogenesis and/or testis development. This Homo sapiens (Human) protein is Male-enhanced antigen 1 (MEA1).